Reading from the N-terminus, the 142-residue chain is uncharacterized protein (142 aa).

The N-acetyltransferase domain occupies 1 to 120 (MADKFDANDE…TILKWEKNMD (120 aa)).

Belongs to the acetyltransferase family.

This is an uncharacterized protein from Streptococcus pyogenes serotype M1.